Consider the following 404-residue polypeptide: 4-hydroxy-3-methylbut-2-enyl diphosphate reductase (404 aa).

Cysteine 66 lines the [4Fe-4S] cluster pocket. Position 96 (histidine 96) interacts with (2E)-4-hydroxy-3-methylbut-2-enyl diphosphate. Histidine 96 serves as a coordination point for dimethylallyl diphosphate. Histidine 96 contacts isopentenyl diphosphate. A [4Fe-4S] cluster-binding site is contributed by cysteine 157. Histidine 185 provides a ligand contact to (2E)-4-hydroxy-3-methylbut-2-enyl diphosphate. Histidine 185 lines the dimethylallyl diphosphate pocket. Histidine 185 is an isopentenyl diphosphate binding site. Glutamate 187 functions as the Proton donor in the catalytic mechanism. Threonine 250 provides a ligand contact to (2E)-4-hydroxy-3-methylbut-2-enyl diphosphate. Cysteine 288 is a [4Fe-4S] cluster binding site. Serine 317, serine 318, asparagine 319, and serine 380 together coordinate (2E)-4-hydroxy-3-methylbut-2-enyl diphosphate. The dimethylallyl diphosphate site is built by serine 317, serine 318, asparagine 319, and serine 380. Positions 317, 318, 319, and 380 each coordinate isopentenyl diphosphate.

Belongs to the IspH family. It depends on [4Fe-4S] cluster as a cofactor.

The enzyme catalyses isopentenyl diphosphate + 2 oxidized [2Fe-2S]-[ferredoxin] + H2O = (2E)-4-hydroxy-3-methylbut-2-enyl diphosphate + 2 reduced [2Fe-2S]-[ferredoxin] + 2 H(+). It carries out the reaction dimethylallyl diphosphate + 2 oxidized [2Fe-2S]-[ferredoxin] + H2O = (2E)-4-hydroxy-3-methylbut-2-enyl diphosphate + 2 reduced [2Fe-2S]-[ferredoxin] + 2 H(+). It participates in isoprenoid biosynthesis; dimethylallyl diphosphate biosynthesis; dimethylallyl diphosphate from (2E)-4-hydroxy-3-methylbutenyl diphosphate: step 1/1. It functions in the pathway isoprenoid biosynthesis; isopentenyl diphosphate biosynthesis via DXP pathway; isopentenyl diphosphate from 1-deoxy-D-xylulose 5-phosphate: step 6/6. Its function is as follows. Catalyzes the conversion of 1-hydroxy-2-methyl-2-(E)-butenyl 4-diphosphate (HMBPP) into a mixture of isopentenyl diphosphate (IPP) and dimethylallyl diphosphate (DMAPP). Acts in the terminal step of the DOXP/MEP pathway for isoprenoid precursor biosynthesis. This chain is 4-hydroxy-3-methylbut-2-enyl diphosphate reductase, found in Prochlorococcus marinus (strain MIT 9211).